A 253-amino-acid polypeptide reads, in one-letter code: Tryptophan synthase alpha chain (253 aa).

Residues glutamate 47 and aspartate 58 each act as proton acceptor in the active site.

Belongs to the TrpA family. Tetramer of two alpha and two beta chains.

The enzyme catalyses (1S,2R)-1-C-(indol-3-yl)glycerol 3-phosphate + L-serine = D-glyceraldehyde 3-phosphate + L-tryptophan + H2O. The protein operates within amino-acid biosynthesis; L-tryptophan biosynthesis; L-tryptophan from chorismate: step 5/5. Functionally, the alpha subunit is responsible for the aldol cleavage of indoleglycerol phosphate to indole and glyceraldehyde 3-phosphate. This chain is Tryptophan synthase alpha chain, found in Lactococcus lactis subsp. lactis (strain IL1403) (Streptococcus lactis).